A 230-amino-acid chain; its full sequence is 5'-methylthioadenosine/S-adenosylhomocysteine nucleosidase (230 aa).

Glu12 functions as the Proton acceptor in the catalytic mechanism. Substrate-binding positions include Gly78, Met153, and 174–175 (ME). Catalysis depends on Asp198, which acts as the Proton donor.

This sequence belongs to the PNP/UDP phosphorylase family. MtnN subfamily.

The catalysed reaction is S-adenosyl-L-homocysteine + H2O = S-(5-deoxy-D-ribos-5-yl)-L-homocysteine + adenine. The enzyme catalyses S-methyl-5'-thioadenosine + H2O = 5-(methylsulfanyl)-D-ribose + adenine. It catalyses the reaction 5'-deoxyadenosine + H2O = 5-deoxy-D-ribose + adenine. It participates in amino-acid biosynthesis; L-methionine biosynthesis via salvage pathway; S-methyl-5-thio-alpha-D-ribose 1-phosphate from S-methyl-5'-thioadenosine (hydrolase route): step 1/2. Functionally, catalyzes the irreversible cleavage of the glycosidic bond in both 5'-methylthioadenosine (MTA) and S-adenosylhomocysteine (SAH/AdoHcy) to adenine and the corresponding thioribose, 5'-methylthioribose and S-ribosylhomocysteine, respectively. Also cleaves 5'-deoxyadenosine, a toxic by-product of radical S-adenosylmethionine (SAM) enzymes, into 5-deoxyribose and adenine. The chain is 5'-methylthioadenosine/S-adenosylhomocysteine nucleosidase from Aeromonas salmonicida (strain A449).